Consider the following 298-residue polypeptide: 5'-AMP-activated protein kinase subunit beta (298 aa).

The tract at residues 1-98 (MGNVQSQEGE…KTHQPYSGPC (98 aa)) is disordered. Residues 19–30 (QDATTTPDNANN) are compositionally biased toward polar residues. The segment covering 48–59 (LNQEGEMSDDNQ) has biased composition (acidic residues). Residues 60-77 (QEGGNNRTSQNGTSGSSG) show a composition bias toward polar residues. Basic residues predominate over residues 78 to 91 (HTKRRSQTSGKKTH). 250-252 (DQS) contributes to the ADP binding site.

The protein belongs to the 5'-AMP-activated protein kinase beta subunit family. AMPK is a heterotrimer of an alpha catalytic subunit (ssp2), a beta (amk2) and a gamma non-catalytic subunits (cbs2). The beta subunit serves as a bridge between the catalytic and the regulatory subunit.

The protein localises to the cytoplasm. Its function is as follows. Beta subunit of AMP-activated protein kinase (AMPK), which is required for transcriptional, metabolic, and developmental adaptations in response to glucose limitation. Has a structural role, mediating heterotrimer formation, and a regulatory role, defining carbon source-regulated subcellular location and substrate specificity of the AMPK kinase complex. The chain is 5'-AMP-activated protein kinase subunit beta (amk2) from Schizosaccharomyces pombe (strain 972 / ATCC 24843) (Fission yeast).